The following is a 316-amino-acid chain: Phosphate acyltransferase (316 aa).

The protein belongs to the PlsX family. As to quaternary structure, homodimer. Probably interacts with PlsY.

It is found in the cytoplasm. It carries out the reaction a fatty acyl-[ACP] + phosphate = an acyl phosphate + holo-[ACP]. It participates in lipid metabolism; phospholipid metabolism. In terms of biological role, catalyzes the reversible formation of acyl-phosphate (acyl-PO(4)) from acyl-[acyl-carrier-protein] (acyl-ACP). This enzyme utilizes acyl-ACP as fatty acyl donor, but not acyl-CoA. The chain is Phosphate acyltransferase from Chlamydia felis (strain Fe/C-56) (Chlamydophila felis).